A 214-amino-acid chain; its full sequence is Potassium/proton antiporter CemA (214 aa).

2 helical membrane-spanning segments follow: residues 92 to 112 (ILHL…SILG) and 174 to 194 (IISG…KYWI).

Belongs to the CemA family.

The protein resides in the plastid. It localises to the chloroplast inner membrane. It catalyses the reaction K(+)(in) + H(+)(out) = K(+)(out) + H(+)(in). In terms of biological role, contributes to K(+)/H(+) antiport activity by supporting proton efflux to control proton extrusion and homeostasis in chloroplasts in a light-dependent manner to modulate photosynthesis. Prevents excessive induction of non-photochemical quenching (NPQ) under continuous-light conditions. Indirectly promotes efficient inorganic carbon uptake into chloroplasts. The chain is Potassium/proton antiporter CemA from Oenothera argillicola (Appalachian evening primrose).